The primary structure comprises 347 residues: Heat-inducible transcription repressor HrcA (347 aa).

It belongs to the HrcA family.

In terms of biological role, negative regulator of class I heat shock genes (grpE-dnaK-dnaJ and groELS operons). Prevents heat-shock induction of these operons. This Desulforamulus reducens (strain ATCC BAA-1160 / DSM 100696 / MI-1) (Desulfotomaculum reducens) protein is Heat-inducible transcription repressor HrcA.